An 801-amino-acid polypeptide reads, in one-letter code: Probable inorganic carbon transporter subunit DabA (801 aa).

Cysteine 330, aspartate 332, histidine 489, and cysteine 504 together coordinate Zn(2+).

The protein belongs to the inorganic carbon transporter (TC 9.A.2) DabA family. As to quaternary structure, forms a complex with DabB. It depends on Zn(2+) as a cofactor.

The protein localises to the cell inner membrane. Its function is as follows. Part of an energy-coupled inorganic carbon pump. This chain is Probable inorganic carbon transporter subunit DabA, found in Jannaschia sp. (strain CCS1).